The chain runs to 310 residues: B3 domain-containing protein At4g02870 (310 aa).

Residues 1–21 (MTLSDDPISPSTQESSNSSYV) show a composition bias toward polar residues. A disordered region spans residues 1–39 (MTLSDDPISPSTQESSNSSYVRSKEAEKNSPSQETDEEV). A DNA-binding region (TF-B3) is located at residues 205 to 300 (RCGRLILQSS…RLQFGVISRN (96 aa)).

The protein resides in the nucleus. The polypeptide is B3 domain-containing protein At4g02870 (ARF42) (Arabidopsis thaliana (Mouse-ear cress)).